Reading from the N-terminus, the 168-residue chain is Photosystem I assembly protein Ycf3 (168 aa).

3 TPR repeats span residues 35–68 (AFTY…EIDP), 72–105 (SYIL…NPFL), and 120–153 (GEQA…TPGN).

It belongs to the Ycf3 family.

It localises to the plastid. The protein resides in the chloroplast thylakoid membrane. Its function is as follows. Essential for the assembly of the photosystem I (PSI) complex. May act as a chaperone-like factor to guide the assembly of the PSI subunits. In Nandina domestica (Heavenly bamboo), this protein is Photosystem I assembly protein Ycf3.